The chain runs to 535 residues: Dimethylaniline monooxygenase [N-oxide-forming] 2 (535 aa).

Ala-2 carries the N-acetylalanine modification. Residues 9-13 (GAGVS), Glu-32, 40-41 (VW), and 61-62 (NT) each bind FAD. Residues 60 to 61 (TN) and 195 to 198 (SGSD) contribute to the NADP(+) site. A Glycyl lysine isopeptide (Lys-Gly) (interchain with G-Cter in SUMO) cross-link involves residue Lys-492. Residues 510-530 (FPVSFLLKILGLVAVVVAFFC) traverse the membrane as a helical segment.

Belongs to the FMO family. The cofactor is FAD. Mg(2+) is required as a cofactor.

It is found in the microsome membrane. It localises to the endoplasmic reticulum membrane. The enzyme catalyses N,N-dimethylaniline + NADPH + O2 + H(+) = N,N-dimethylaniline N-oxide + NADP(+) + H2O. Functionally, catalyzes the oxidative metabolism of numerous xenobiotics, including mainly therapeutic drugs and insecticides that contain a soft nucleophile, most commonly nitrogen and sulfur and participates to their bioactivation. The chain is Dimethylaniline monooxygenase [N-oxide-forming] 2 from Macaca mulatta (Rhesus macaque).